Consider the following 245-residue polypeptide: Geranylgeranylglyceryl phosphate synthase (245 aa).

Positions 20 and 50 each coordinate Mg(2+). Sn-glycerol 1-phosphate is bound by residues 169–175, 202–203, and 224–225; these read YLEAGSG, GG, and GT.

The protein belongs to the GGGP/HepGP synthase family. Group II subfamily. Mg(2+) serves as cofactor.

The protein resides in the cytoplasm. It carries out the reaction sn-glycerol 1-phosphate + (2E,6E,10E)-geranylgeranyl diphosphate = sn-3-O-(geranylgeranyl)glycerol 1-phosphate + diphosphate. It functions in the pathway membrane lipid metabolism; glycerophospholipid metabolism. In terms of biological role, prenyltransferase that catalyzes the transfer of the geranylgeranyl moiety of geranylgeranyl diphosphate (GGPP) to the C3 hydroxyl of sn-glycerol-1-phosphate (G1P). This reaction is the first ether-bond-formation step in the biosynthesis of archaeal membrane lipids. The sequence is that of Geranylgeranylglyceryl phosphate synthase from Ignicoccus hospitalis (strain KIN4/I / DSM 18386 / JCM 14125).